The sequence spans 347 residues: Acetylglutamate kinase, chloroplastic (347 aa).

A chloroplast-targeting transit peptide spans 1 to 50 (MATVTSNASPKSFSFTVSNPFKTLIPNKSPSLCYPTRNKNHHRLGFSIKA). At T51 the chain carries N-acetylthreonine. Residue 94–95 (GA) coordinates ATP. Residues G126, R148, and 242–245 (NINA) each bind N-acetyl-L-glutamate. Residue K260 coordinates L-arginine. ATP is bound by residues 265-266 (TD) and L271. K282 contacts L-arginine. Residue 297 to 305 (KVAGGMIPK) participates in ATP binding. L-arginine contacts are provided by residues 334 to 337 (EIMS) and G342.

Belongs to the acetylglutamate kinase family. ArgB subfamily. In terms of assembly, interacts with GLB1. Interaction is dependent of MgATP and inhibited by 2-oxoglutarate, arginine, glutamate, citrate, and oxaloacetate.

It localises to the plastid. It is found in the chloroplast stroma. It carries out the reaction N-acetyl-L-glutamate + ATP = N-acetyl-L-glutamyl 5-phosphate + ADP. The protein operates within amino-acid biosynthesis; L-arginine biosynthesis; N(2)-acetyl-L-ornithine from L-glutamate: step 2/4. With respect to regulation, inhibited by arginine. Inhibition is relieved by binding to GLB1. Its function is as follows. Involved in the arginine biosynthetic pathway via the intermediate compound ornithine. The polypeptide is Acetylglutamate kinase, chloroplastic (Arabidopsis thaliana (Mouse-ear cress)).